The sequence spans 406 residues: Tyrosine--tRNA ligase (406 aa).

Positions 48–57 match the 'HIGH' region motif; sequence PSRPDLHLGH. A 'KMSKS' region motif is present at residues 232–236; that stretch reads KMSKS. K235 lines the ATP pocket. Positions 339–401 constitute an S4 RNA-binding domain; the sequence is MPVVELLMAL…GKRKFFKVAR (63 aa).

The protein belongs to the class-I aminoacyl-tRNA synthetase family. TyrS type 2 subfamily. In terms of assembly, homodimer.

The protein resides in the cytoplasm. It carries out the reaction tRNA(Tyr) + L-tyrosine + ATP = L-tyrosyl-tRNA(Tyr) + AMP + diphosphate + H(+). Functionally, catalyzes the attachment of tyrosine to tRNA(Tyr) in a two-step reaction: tyrosine is first activated by ATP to form Tyr-AMP and then transferred to the acceptor end of tRNA(Tyr). This chain is Tyrosine--tRNA ligase, found in Chlorobaculum tepidum (strain ATCC 49652 / DSM 12025 / NBRC 103806 / TLS) (Chlorobium tepidum).